The chain runs to 931 residues: Short transient receptor potential channel 6 (931 aa).

Low complexity predominate over residues 1–23; the sequence is MSQSPAFGPRRGSSPRGAAGAAA. Residues 1–26 form a disordered region; it reads MSQSPAFGPRRGSSPRGAAGAAARRN. The Cytoplasmic portion of the chain corresponds to 1-438; that stretch reads MSQSPAFGPR…CSKMGKIMRG (438 aa). ANK repeat units follow at residues 97 to 126, 132 to 161, 163 to 189, and 218 to 247; these read IEEERFLDAAEYGNIPVVRKMLEECHSLNV, MGQNALQLAVANEHLEITELLLKKENLSRV, DALLLAISKGYVRIVEAILSHPAFAEG, and HDVTPIILAAHCQEYEIVHTLLRKGARIER. A helical transmembrane segment spans residues 439–459; it reads PFMKFVAHAASFTIFLGLLVM. Topologically, residues 460-487 are extracellular; it reads NAADRFEGTKLLPNETSTDNAKQLFRMK. N-linked (GlcNAc...) asparagine glycosylation is present at asparagine 473. A helical transmembrane segment spans residues 488 to 508; it reads TSCFSWMEMLIISWVIGMIWA. At 509–521 the chain is on the cytoplasmic side; it reads ECKEIWTQGPKEY. A helical membrane pass occupies residues 522-542; the sequence is LFELWNMLDFGMLAIFAASFI. Over 543–592 the chain is Extracellular; it reads ARFMAFWHASKAQSIIDANDTLKDLTKVTLGDNVKYYNLARIKWDPSDPQ. A glycan (N-linked (GlcNAc...) asparagine) is linked at asparagine 561. The helical transmembrane segment at 593–613 threads the bilayer; it reads IISEGLYAIAVVLSFSRIAYI. At 614 to 636 the chain is on the cytoplasmic side; it reads LPANESFGPLQISLGRTVKDIFK. Residues 637 to 657 form a helical membrane-spanning segment; that stretch reads FMVIFIMVFVAFMIGMFNLYS. At 658 to 706 the chain is on the extracellular side; the sequence is YYIGAKQNEAFTTVEESFKTLFWAIFGLSEVKSVVINYNHKFIENIGYV. A helical membrane pass occupies residues 707-727; it reads LYGVYNVTMVIVLLNMLIAMI. The Cytoplasmic segment spans residues 728-931; that stretch reads NSSFQEIEDD…MEPNQEETNR (204 aa). Residue serine 815 is modified to Phosphoserine.

Belongs to the transient receptor (TC 1.A.4) family. STrpC subfamily. TRPC6 sub-subfamily. As to quaternary structure, homodimer; forms channel complex. Interacts with MX1 and RNF24. In terms of processing, phosphorylated by FYN, leading to an increase of TRPC6 channel activity. Expressed primarily in placenta, lung, spleen, ovary and small intestine. Expressed in podocytes and is a component of the glomerular slit diaphragm.

The protein localises to the cell membrane. It carries out the reaction Ca(2+)(in) = Ca(2+)(out). Its activity is regulated as follows. Activated by diacylglycerol (DAG) in a membrane-delimited fashion, independently of protein kinase C. Its function is as follows. Forms a receptor-activated non-selective calcium permeant cation channel. Probably is operated by a phosphatidylinositol second messenger system activated by receptor tyrosine kinases or G-protein coupled receptors. Activated by diacylglycerol (DAG) in a membrane-delimited fashion, independently of protein kinase C. Seems not to be activated by intracellular calcium store depletion. This is Short transient receptor potential channel 6 from Homo sapiens (Human).